Consider the following 205-residue polypeptide: Protein phosphatase inhibitor 2 (205 aa).

A disordered region spans residues 1 to 44 (MAASTASHRPIKGILKNKTSTTSSMVASAEQPRGNVDEELSKKS). Position 2 is an N-acetylalanine (alanine 2). Required for binding PPP1CC regions lie at residues 12-17 (KGILKN) and 43-55 (KSQKWDEMNILAT). The segment covering 17 to 26 (NKTSTTSSMV) has biased composition (polar residues). The segment covering 35–44 (NVDEELSKKS) has biased composition (basic and acidic residues). Phosphoserine; by ATM is present on serine 44. Threonine 73 is subject to Phosphothreonine; by GSK3. Serine 87 carries the post-translational modification Phosphoserine. Phosphothreonine is present on residues threonine 89 and threonine 92. Positions 111-142 (EPKYRIQEQESSGEEDSDLSPEEREKKRQFEM) are disordered. Phosphoserine occurs at positions 121, 122, 127, and 130. Over residues 121-130 (SSGEEDSDLS) the composition is skewed to acidic residues. A compositionally biased stretch (basic and acidic residues) spans 131–142 (PEEREKKRQFEM). The interval 147–150 (HYNE) is required for binding PPP1CC catalytic center, displacing metal ions and inhibition of PPP1CC catalytic activity. A disordered region spans residues 163 to 205 (KDLHDDDEDEEMLETADGESMNTEESNQGSTPSDQQQNKLRSS). Positions 167-179 (DDDEDEEMLETAD) are enriched in acidic residues. Positions 182-205 (SMNTEESNQGSTPSDQQQNKLRSS) are enriched in polar residues.

The protein belongs to the protein phosphatase inhibitor 2 family. Heterodimer with PP1. Post-translationally, phosphorylation on Thr-73 by GSK3 activates PP1 by dissociating the PP1-PPP1R2 complex. Phosphorylation on Ser-44 by ATM activates PP1 by dissociating the PP1-PPP1R2 complex.

In terms of biological role, inhibitor of protein-phosphatase 1. This is Protein phosphatase inhibitor 2 (PPP1R2) from Homo sapiens (Human).